The chain runs to 407 residues: Peptidase T (407 aa).

Zn(2+) is bound at residue His-82. The active site involves Asp-84. Residue Asp-143 coordinates Zn(2+). Glu-177 serves as the catalytic Proton acceptor. Zn(2+) contacts are provided by Glu-178, Asp-200, and His-382.

Belongs to the peptidase M20B family. Requires Zn(2+) as cofactor.

The protein localises to the cytoplasm. It carries out the reaction Release of the N-terminal residue from a tripeptide.. Functionally, cleaves the N-terminal amino acid of tripeptides. This Streptococcus equi subsp. equi (strain 4047) protein is Peptidase T.